A 175-amino-acid polypeptide reads, in one-letter code: Ribosome maturation factor RimM (175 aa).

A PRC barrel domain is found at 97-170 (NGQYYWTDVL…YLYVDWQMAW (74 aa)).

It belongs to the RimM family. In terms of assembly, binds ribosomal protein uS19.

The protein localises to the cytoplasm. Its function is as follows. An accessory protein needed during the final step in the assembly of 30S ribosomal subunit, possibly for assembly of the head region. Essential for efficient processing of 16S rRNA. May be needed both before and after RbfA during the maturation of 16S rRNA. It has affinity for free ribosomal 30S subunits but not for 70S ribosomes. The chain is Ribosome maturation factor RimM from Dichelobacter nodosus (strain VCS1703A).